Consider the following 315-residue polypeptide: Ribose-phosphate pyrophosphokinase (315 aa).

Residues 37–39 (DGE) and 96–97 (RQ) each bind ATP. His131 and Asp170 together coordinate Mg(2+). Residue Lys194 is part of the active site. D-ribose 5-phosphate contacts are provided by residues Arg196, Asp220, and 224-228 (DTGGT).

The protein belongs to the ribose-phosphate pyrophosphokinase family. Class I subfamily. As to quaternary structure, homohexamer. Mg(2+) serves as cofactor.

It localises to the cytoplasm. It carries out the reaction D-ribose 5-phosphate + ATP = 5-phospho-alpha-D-ribose 1-diphosphate + AMP + H(+). The protein operates within metabolic intermediate biosynthesis; 5-phospho-alpha-D-ribose 1-diphosphate biosynthesis; 5-phospho-alpha-D-ribose 1-diphosphate from D-ribose 5-phosphate (route I): step 1/1. In terms of biological role, involved in the biosynthesis of the central metabolite phospho-alpha-D-ribosyl-1-pyrophosphate (PRPP) via the transfer of pyrophosphoryl group from ATP to 1-hydroxyl of ribose-5-phosphate (Rib-5-P). This is Ribose-phosphate pyrophosphokinase from Escherichia coli O6:H1 (strain CFT073 / ATCC 700928 / UPEC).